The primary structure comprises 792 residues: Xaa-Pro dipeptidyl-peptidase (792 aa).

Catalysis depends on charge relay system residues Ser-363, Asp-482, and His-513.

It belongs to the peptidase S15 family. In terms of assembly, homodimer.

It is found in the cytoplasm. It catalyses the reaction Hydrolyzes Xaa-Pro-|- bonds to release unblocked, N-terminal dipeptides from substrates including Ala-Pro-|-p-nitroanilide and (sequentially) Tyr-Pro-|-Phe-Pro-|-Gly-Pro-|-Ile.. Its function is as follows. Removes N-terminal dipeptides sequentially from polypeptides having unsubstituted N-termini provided that the penultimate residue is proline. The protein is Xaa-Pro dipeptidyl-peptidase of Lactobacillus delbrueckii subsp. bulgaricus (strain ATCC 11842 / DSM 20081 / BCRC 10696 / JCM 1002 / NBRC 13953 / NCIMB 11778 / NCTC 12712 / WDCM 00102 / Lb 14).